Here is a 263-residue protein sequence, read N- to C-terminus: uncharacterized protein (263 aa).

An N-terminal signal peptide occupies residues 1–22 (MEYLKRLALLISVIILTIFIMG). Cysteine 23 carries the N-palmitoyl cysteine lipid modification. A lipid anchor (S-diacylglycerol cysteine) is attached at cysteine 23.

The protein belongs to the staphylococcal tandem lipoprotein family.

The protein localises to the cell membrane. This is an uncharacterized protein from Staphylococcus aureus (strain COL).